The primary structure comprises 231 residues: Large ribosomal subunit protein uL1 (231 aa).

Belongs to the universal ribosomal protein uL1 family. In terms of assembly, part of the 50S ribosomal subunit.

Binds directly to 23S rRNA. The L1 stalk is quite mobile in the ribosome, and is involved in E site tRNA release. Its function is as follows. Protein L1 is also a translational repressor protein, it controls the translation of the L11 operon by binding to its mRNA. The chain is Large ribosomal subunit protein uL1 from Pseudomonas syringae pv. syringae (strain B728a).